Here is a 396-residue protein sequence, read N- to C-terminus: Phosphoglycerate kinase (396 aa).

Substrate-binding positions include 21 to 23 (DFN), R36, 59 to 62 (HLGK), R119, and R156. ATP-binding positions include K206, G294, E325, and 352 to 355 (GGDS).

The protein belongs to the phosphoglycerate kinase family. In terms of assembly, monomer.

It localises to the cytoplasm. The enzyme catalyses (2R)-3-phosphoglycerate + ATP = (2R)-3-phospho-glyceroyl phosphate + ADP. It participates in carbohydrate degradation; glycolysis; pyruvate from D-glyceraldehyde 3-phosphate: step 2/5. This Listeria innocua serovar 6a (strain ATCC BAA-680 / CLIP 11262) protein is Phosphoglycerate kinase.